The primary structure comprises 488 residues: Transmembrane protein 39A-B (488 aa).

Asparagine 31 and asparagine 39 each carry an N-linked (GlcNAc...) asparagine glycan. 3 helical membrane-spanning segments follow: residues 72–92 (GLVF…TQYI), 110–130 (TSLN…VMLA), and 155–175 (LIIG…WTTV). Asparagine 180 carries N-linked (GlcNAc...) asparagine glycosylation. Residues 182 to 202 (SVLNLLFLGYPFGVYVPLCCF) form a helical membrane-spanning segment. N-linked (GlcNAc...) asparagine glycosylation is present at asparagine 206. 4 helical membrane passes run 287–307 (EVLF…LCFV), 319–339 (CEHL…QLLP), 420–440 (LLNL…YSLL), and 446–466 (NHTL…FKLL).

This sequence belongs to the TMEM39 family.

It is found in the membrane. This chain is Transmembrane protein 39A-B (tmem39a-b), found in Xenopus laevis (African clawed frog).